The sequence spans 150 residues: 3-hydroxyacyl-[acyl-carrier-protein] dehydratase FabZ (150 aa).

Histidine 51 is a catalytic residue.

This sequence belongs to the thioester dehydratase family. FabZ subfamily.

It is found in the cytoplasm. It catalyses the reaction a (3R)-hydroxyacyl-[ACP] = a (2E)-enoyl-[ACP] + H2O. Functionally, involved in unsaturated fatty acids biosynthesis. Catalyzes the dehydration of short chain beta-hydroxyacyl-ACPs and long chain saturated and unsaturated beta-hydroxyacyl-ACPs. This chain is 3-hydroxyacyl-[acyl-carrier-protein] dehydratase FabZ, found in Legionella pneumophila (strain Lens).